We begin with the raw amino-acid sequence, 443 residues long: ATP-dependent protease ATPase subunit HslU (443 aa).

ATP is bound by residues Ile-18, 60-65 (GVGKTE), Asp-256, Glu-321, and Arg-393.

Belongs to the ClpX chaperone family. HslU subfamily. In terms of assembly, a double ring-shaped homohexamer of HslV is capped on each side by a ring-shaped HslU homohexamer. The assembly of the HslU/HslV complex is dependent on binding of ATP.

The protein resides in the cytoplasm. In terms of biological role, ATPase subunit of a proteasome-like degradation complex; this subunit has chaperone activity. The binding of ATP and its subsequent hydrolysis by HslU are essential for unfolding of protein substrates subsequently hydrolyzed by HslV. HslU recognizes the N-terminal part of its protein substrates and unfolds these before they are guided to HslV for hydrolysis. The sequence is that of ATP-dependent protease ATPase subunit HslU from Pasteurella multocida (strain Pm70).